The primary structure comprises 123 residues: Preprofallaxidin-3 (123 aa).

An N-terminal signal peptide occupies residues 1–22 (MASLKKSLFLVLFLGLVSLSIC). Residues 23-46 (EEKKRENEDDAEDENHEEESEEKR) constitute a propeptide that is removed on maturation. Residues 26-46 (KRENEDDAEDENHEEESEEKR) form a disordered region. Residues 30-42 (EDDAEDENHEEES) are compositionally biased toward acidic residues. Leucine 62 bears the Leucine amide mark. Positions 66-70 (SEEKR) are excised as a propeptide. Position 74 is a phenylalanine amide (phenylalanine 74). Positions 78–82 (SEEKR) are excised as a propeptide. The residue at position 88 (phenylalanine 88) is a Phenylalanine amide. The propeptide occupies 92–96 (SEEKR). An Isoleucine amide modification is found at isoleucine 102. Positions 106–110 (SEEKR) are excised as a propeptide. An Isoleucine amide modification is found at isoleucine 116. Positions 120–123 (KKKK) are excised as a propeptide.

Belongs to the frog skin active peptide (FSAP) family. Brevinin subfamily. Expressed by the skin glands.

It is found in the secreted. Its function is as follows. Fallaxidin-1.1 shows no antibacterial activity against Gram-positive or Gram-negative bacteria. Does not inhibit the formation of NO by neuronal nitric oxide synthase. Has no effect on splenocyte proliferation or smooth muscle contraction. Fallaxidin-1.2 shows no antibacterial activity against Gram-positive or Gram-negative bacteria. Does not inhibit the formation of NO by neuronal nitric oxide synthase. Has no effect on splenocyte proliferation or smooth muscle contraction. Functionally, fallaxidin-1.3 shows no antibacterial activity against Gram-positive or Gram-negative bacteria. Does not inhibit the formation of NO by neuronal nitric oxide synthase. Has no effect on splenocyte proliferation or smooth muscle contraction. In terms of biological role, fallaxidin-3.2 shows antibacterial activity against the Gram-positive bacteria E.faecalis (MIC=100 uM) and L.lactis (MIC=500 uM). No antibacterial activity against the Gram-positive bacteria B.cereus, L.innocua, M.luteus, S.epidermidis, S.uberis and S.aureus, or the Gram-negative bacteria E.cloacae and E.coli. In Litoria fallax (Eastern dwarf tree frog), this protein is Preprofallaxidin-3.